A 699-amino-acid polypeptide reads, in one-letter code: (E2-independent) E3 ubiquitin-conjugating enzyme FATS (699 aa).

The interval 48-116 is required for interaction with p53/TP53; it reads MISSIVISQM…LGIPAPSDER (69 aa). 3 disordered regions span residues 107-134, 443-473, and 528-569; these read LGIP…GGPR, KPTR…ERRH, and KSED…PARS. Composition is skewed to basic and acidic residues over residues 113-129 and 460-473; these read SDER…EERP and CLSR…ERRH. Residues 116–224 are required for interaction with HDAC1; sequence RGPEAELPPK…GLCERRKYWV (109 aa). The span at 534–545 shows a compositional bias: pro residues; it reads TPEPSPAAPSPA. Residues 571 to 699 are ALMS motif; that stretch reads TLQEALEVRK…LDQLLQRNAV (129 aa).

Interacts with HDAC1; the interaction prevents binding of HDAC1 to CDKN1A/p21 and facilitates the acetylation and stabilization of CDKN1A/p21. Interacts with p53/TP53; the interaction inhibits binding of p53/TP53 and MDM2.

Its subcellular location is the cytoplasm. It is found in the cytoskeleton. The protein resides in the microtubule organizing center. The protein localises to the centrosome. Its function is as follows. Tumor suppressor that is required to sustain G2/M checkpoint after DNA damage. Acts as a p53/TP53 activator by inhibiting MDM2 binding to p53/TP53 and stimulating non-proteolytic polyubiquitination of p53/TP53. Exhibits ubiquitin ligase (E3) activity and assemble ubiquitin polymers through 'Lys-11'- (K11-), 'Lys-29'- (K29-) and 'Lys-63'- (K63)-linkages, independently of the ubiquitin-conjugating enzyme (E2). Promotes p53/TP53-dependent transcription of CDKN1A/p21, leading to robust checkpoint response. Mediates CDKN1A/p21 protein stability in a ubiquitin-independent manner. Interacts with HDAC1 and prevents binding of HDAC1 to CDKN1A/p21 and facilitates the acetylation and stabilization of CDKN1A/p21. May have a role in the assembly of primary cilia. This Homo sapiens (Human) protein is (E2-independent) E3 ubiquitin-conjugating enzyme FATS.